The following is a 172-amino-acid chain: Endoribonuclease YbeY (172 aa).

Zn(2+)-binding residues include H124, H128, and H134.

The protein belongs to the endoribonuclease YbeY family. Zn(2+) serves as cofactor.

It is found in the cytoplasm. In terms of biological role, single strand-specific metallo-endoribonuclease involved in late-stage 70S ribosome quality control and in maturation of the 3' terminus of the 16S rRNA. The polypeptide is Endoribonuclease YbeY (Rhodopseudomonas palustris (strain BisA53)).